We begin with the raw amino-acid sequence, 347 residues long: tRNA N6-adenosine threonylcarbamoyltransferase (347 aa).

Fe cation contacts are provided by histidine 117 and histidine 121. Residues 140–144 (LVSGG), aspartate 174, glycine 187, aspartate 191, and asparagine 281 each bind substrate. Aspartate 309 contributes to the Fe cation binding site.

The protein belongs to the KAE1 / TsaD family. It depends on Fe(2+) as a cofactor.

The protein resides in the cytoplasm. The enzyme catalyses L-threonylcarbamoyladenylate + adenosine(37) in tRNA = N(6)-L-threonylcarbamoyladenosine(37) in tRNA + AMP + H(+). Its function is as follows. Required for the formation of a threonylcarbamoyl group on adenosine at position 37 (t(6)A37) in tRNAs that read codons beginning with adenine. Is involved in the transfer of the threonylcarbamoyl moiety of threonylcarbamoyl-AMP (TC-AMP) to the N6 group of A37, together with TsaE and TsaB. TsaD likely plays a direct catalytic role in this reaction. This Thermobifida fusca (strain YX) protein is tRNA N6-adenosine threonylcarbamoyltransferase.